Reading from the N-terminus, the 275-residue chain is 4-hydroxy-tetrahydrodipicolinate reductase (275 aa).

Glycine 12–methionine 17 lines the NAD(+) pocket. Residue arginine 39 participates in NADP(+) binding. NAD(+) is bound by residues glycine 102–threonine 104 and serine 126–methionine 129. Histidine 160 acts as the Proton donor/acceptor in catalysis. Histidine 161 contributes to the (S)-2,3,4,5-tetrahydrodipicolinate binding site. Lysine 164 acts as the Proton donor in catalysis. Position 170–171 (glycine 170–threonine 171) interacts with (S)-2,3,4,5-tetrahydrodipicolinate.

It belongs to the DapB family.

It is found in the cytoplasm. It carries out the reaction (S)-2,3,4,5-tetrahydrodipicolinate + NAD(+) + H2O = (2S,4S)-4-hydroxy-2,3,4,5-tetrahydrodipicolinate + NADH + H(+). It catalyses the reaction (S)-2,3,4,5-tetrahydrodipicolinate + NADP(+) + H2O = (2S,4S)-4-hydroxy-2,3,4,5-tetrahydrodipicolinate + NADPH + H(+). The protein operates within amino-acid biosynthesis; L-lysine biosynthesis via DAP pathway; (S)-tetrahydrodipicolinate from L-aspartate: step 4/4. In terms of biological role, catalyzes the conversion of 4-hydroxy-tetrahydrodipicolinate (HTPA) to tetrahydrodipicolinate. The protein is 4-hydroxy-tetrahydrodipicolinate reductase of Agrobacterium fabrum (strain C58 / ATCC 33970) (Agrobacterium tumefaciens (strain C58)).